Reading from the N-terminus, the 300-residue chain is Shikimate kinase, chloroplastic (300 aa).

A chloroplast-targeting transit peptide spans 1-65 (MEARVSQSLQ…SDRRVQLKVS (65 aa)). 111–118 (GMMGCGKT) is an ATP binding site. Residue Thr-118 coordinates Mg(2+). Residues Asp-136, Arg-161, and Gly-183 each coordinate substrate. Arg-222 provides a ligand contact to ATP.

The protein belongs to the shikimate kinase family. Mg(2+) serves as cofactor.

Its subcellular location is the plastid. It localises to the chloroplast. It carries out the reaction shikimate + ATP = 3-phosphoshikimate + ADP + H(+). It participates in metabolic intermediate biosynthesis; chorismate biosynthesis; chorismate from D-erythrose 4-phosphate and phosphoenolpyruvate: step 5/7. In terms of biological role, catalyzes the specific phosphorylation of the 3-hydroxyl group of shikimic acid using ATP as a cosubstrate. The sequence is that of Shikimate kinase, chloroplastic (SK) from Solanum lycopersicum (Tomato).